We begin with the raw amino-acid sequence, 81 residues long: Photosystem I iron-sulfur center (81 aa).

2 4Fe-4S ferredoxin-type domains span residues 1–31 (MSHT…MVPW) and 37–68 (GQIA…IRVY). The [4Fe-4S] cluster site is built by C11, C14, C17, C21, C48, C51, C54, and C58.

As to quaternary structure, the cyanobacterial PSI reaction center is composed of one copy each of PsaA,B,C,D,E,F,I,J,K,L,M and X, and forms trimeric complexes. [4Fe-4S] cluster serves as cofactor.

Its subcellular location is the cellular thylakoid membrane. It carries out the reaction reduced [plastocyanin] + hnu + oxidized [2Fe-2S]-[ferredoxin] = oxidized [plastocyanin] + reduced [2Fe-2S]-[ferredoxin]. Functionally, apoprotein for the two 4Fe-4S centers FA and FB of photosystem I (PSI); essential for photochemical activity. FB is the terminal electron acceptor of PSI, donating electrons to ferredoxin. The C-terminus interacts with PsaA/B/D and helps assemble the protein into the PSI complex. Required for binding of PsaD and PsaE to PSI. PSI is a plastocyanin/cytochrome c6-ferredoxin oxidoreductase, converting photonic excitation into a charge separation, which transfers an electron from the donor P700 chlorophyll pair to the spectroscopically characterized acceptors A0, A1, FX, FA and FB in turn. In Acaryochloris marina (strain MBIC 11017), this protein is Photosystem I iron-sulfur center.